Here is a 655-residue protein sequence, read N- to C-terminus: tRNA 5-methylaminomethyl-2-thiouridine biosynthesis bifunctional protein MnmC (655 aa).

Residues 1–236 (MTDPLVPAVL…KRAMLVGRFA (236 aa)) form a tRNA (mnm(5)s(2)U34)-methyltransferase region. An FAD-dependent cmnm(5)s(2)U34 oxidoreductase region spans residues 260-655 (IGTGLAGCAA…LRALRQGTAS (396 aa)).

This sequence in the N-terminal section; belongs to the methyltransferase superfamily. tRNA (mnm(5)s(2)U34)-methyltransferase family. In the C-terminal section; belongs to the DAO family. FAD is required as a cofactor.

The protein resides in the cytoplasm. It carries out the reaction 5-aminomethyl-2-thiouridine(34) in tRNA + S-adenosyl-L-methionine = 5-methylaminomethyl-2-thiouridine(34) in tRNA + S-adenosyl-L-homocysteine + H(+). Its function is as follows. Catalyzes the last two steps in the biosynthesis of 5-methylaminomethyl-2-thiouridine (mnm(5)s(2)U) at the wobble position (U34) in tRNA. Catalyzes the FAD-dependent demodification of cmnm(5)s(2)U34 to nm(5)s(2)U34, followed by the transfer of a methyl group from S-adenosyl-L-methionine to nm(5)s(2)U34, to form mnm(5)s(2)U34. This chain is tRNA 5-methylaminomethyl-2-thiouridine biosynthesis bifunctional protein MnmC, found in Paraburkholderia phymatum (strain DSM 17167 / CIP 108236 / LMG 21445 / STM815) (Burkholderia phymatum).